The sequence spans 485 residues: Glutamate--tRNA ligase (485 aa).

Positions 11–21 (PSPTGHLHIGN) match the 'HIGH' region motif. A 'KMSKS' region motif is present at residues 252–256 (KLSKR). Lys-255 contacts ATP.

This sequence belongs to the class-I aminoacyl-tRNA synthetase family. Glutamate--tRNA ligase type 1 subfamily. Monomer.

It localises to the cytoplasm. The enzyme catalyses tRNA(Glu) + L-glutamate + ATP = L-glutamyl-tRNA(Glu) + AMP + diphosphate. Catalyzes the attachment of glutamate to tRNA(Glu) in a two-step reaction: glutamate is first activated by ATP to form Glu-AMP and then transferred to the acceptor end of tRNA(Glu). In Bacillus cytotoxicus (strain DSM 22905 / CIP 110041 / 391-98 / NVH 391-98), this protein is Glutamate--tRNA ligase.